The primary structure comprises 273 residues: 4-hydroxy-tetrahydrodipicolinate reductase (273 aa).

NAD(+) contacts are provided by residues 11–16 (GATGKM) and 106–108 (GTT). His-162 acts as the Proton donor/acceptor in catalysis. His-163 is a (S)-2,3,4,5-tetrahydrodipicolinate binding site. Lys-166 acts as the Proton donor in catalysis. 172-173 (GT) provides a ligand contact to (S)-2,3,4,5-tetrahydrodipicolinate.

This sequence belongs to the DapB family.

The protein resides in the cytoplasm. It catalyses the reaction (S)-2,3,4,5-tetrahydrodipicolinate + NAD(+) + H2O = (2S,4S)-4-hydroxy-2,3,4,5-tetrahydrodipicolinate + NADH + H(+). It carries out the reaction (S)-2,3,4,5-tetrahydrodipicolinate + NADP(+) + H2O = (2S,4S)-4-hydroxy-2,3,4,5-tetrahydrodipicolinate + NADPH + H(+). Its pathway is amino-acid biosynthesis; L-lysine biosynthesis via DAP pathway; (S)-tetrahydrodipicolinate from L-aspartate: step 4/4. Catalyzes the conversion of 4-hydroxy-tetrahydrodipicolinate (HTPA) to tetrahydrodipicolinate. In Synechococcus elongatus (strain ATCC 33912 / PCC 7942 / FACHB-805) (Anacystis nidulans R2), this protein is 4-hydroxy-tetrahydrodipicolinate reductase.